The primary structure comprises 226 residues: Enolase-phosphatase E1 (226 aa).

Belongs to the HAD-like hydrolase superfamily. MasA/MtnC family. In terms of assembly, monomer. The cofactor is Mg(2+).

The enzyme catalyses 5-methylsulfanyl-2,3-dioxopentyl phosphate + H2O = 1,2-dihydroxy-5-(methylsulfanyl)pent-1-en-3-one + phosphate. The protein operates within amino-acid biosynthesis; L-methionine biosynthesis via salvage pathway; L-methionine from S-methyl-5-thio-alpha-D-ribose 1-phosphate: step 3/6. Its pathway is amino-acid biosynthesis; L-methionine biosynthesis via salvage pathway; L-methionine from S-methyl-5-thio-alpha-D-ribose 1-phosphate: step 4/6. Functionally, bifunctional enzyme that catalyzes the enolization of 2,3-diketo-5-methylthiopentyl-1-phosphate (DK-MTP-1-P) into the intermediate 2-hydroxy-3-keto-5-methylthiopentenyl-1-phosphate (HK-MTPenyl-1-P), which is then dephosphorylated to form the acireductone 1,2-dihydroxy-3-keto-5-methylthiopentene (DHK-MTPene). The sequence is that of Enolase-phosphatase E1 from Shewanella baltica (strain OS155 / ATCC BAA-1091).